A 491-amino-acid polypeptide reads, in one-letter code: Phosphatidylglycerol--prolipoprotein diacylglyceryl transferase (491 aa).

3 consecutive transmembrane segments (helical) span residues 24-44, 58-78, and 98-118; these read IPLR…IWWG, VLDV…AYHV, and IWQG…GAWI. Arg-146 serves as a coordination point for a 1,2-diacyl-sn-glycero-3-phospho-(1'-sn-glycerol). The next 2 helical transmembrane spans lie at 192 to 212 and 256 to 276; these read IVHP…IALV and INNF…VFAT. Low complexity predominate over residues 309-323; that stretch reads NGPAEPGATASTATD. Residues 309–491 form a disordered region; sequence NGPAEPGATA…DRVDSGENDA (183 aa). The span at 347-360 shows a compositional bias: basic and acidic residues; it reads KGDRGTADAADTAK. Composition is skewed to low complexity over residues 361 to 387, 394 to 406, and 415 to 438; these read DASA…GSSD, AVKA…AAEK, and AGEA…SAKS. Residues 453-462 show a composition bias toward basic and acidic residues; that stretch reads NESESTRDNE. Over residues 463–481 the composition is skewed to low complexity; sequence STSAGTAASATGSAGAGAT. The span at 482–491 shows a compositional bias: basic and acidic residues; sequence DRVDSGENDA.

It belongs to the Lgt family.

It is found in the cell membrane. The catalysed reaction is L-cysteinyl-[prolipoprotein] + a 1,2-diacyl-sn-glycero-3-phospho-(1'-sn-glycerol) = an S-1,2-diacyl-sn-glyceryl-L-cysteinyl-[prolipoprotein] + sn-glycerol 1-phosphate + H(+). The protein operates within protein modification; lipoprotein biosynthesis (diacylglyceryl transfer). Functionally, catalyzes the transfer of the diacylglyceryl group from phosphatidylglycerol to the sulfhydryl group of the N-terminal cysteine of a prolipoprotein, the first step in the formation of mature lipoproteins. This is Phosphatidylglycerol--prolipoprotein diacylglyceryl transferase from Nocardia farcinica (strain IFM 10152).